The primary structure comprises 161 residues: Regulator of ribonuclease activity A (161 aa).

It belongs to the RraA family. As to quaternary structure, homotrimer. Binds to both RNA-binding sites in the C-terminal region of Rne and to RhlB.

The protein localises to the cytoplasm. Functionally, globally modulates RNA abundance by binding to RNase E (Rne) and regulating its endonucleolytic activity. Can modulate Rne action in a substrate-dependent manner by altering the composition of the degradosome. Modulates RNA-binding and helicase activities of the degradosome. This is Regulator of ribonuclease activity A from Alteromonas mediterranea (strain DSM 17117 / CIP 110805 / LMG 28347 / Deep ecotype).